The chain runs to 101 residues: Protein PrgJ (101 aa).

To S.flexneri MxiI.

In terms of biological role, required for invasion of epithelial cells. The polypeptide is Protein PrgJ (prgJ) (Salmonella typhimurium (strain LT2 / SGSC1412 / ATCC 700720)).